Consider the following 319-residue polypeptide: tRNA dimethylallyltransferase (319 aa).

26–33 (GPTAAGKS) is a binding site for ATP. 28–33 (TAAGKS) is a substrate binding site. The interval 51-54 (DSMQ) is interaction with substrate tRNA.

Belongs to the IPP transferase family. Monomer. The cofactor is Mg(2+).

The catalysed reaction is adenosine(37) in tRNA + dimethylallyl diphosphate = N(6)-dimethylallyladenosine(37) in tRNA + diphosphate. In terms of biological role, catalyzes the transfer of a dimethylallyl group onto the adenine at position 37 in tRNAs that read codons beginning with uridine, leading to the formation of N6-(dimethylallyl)adenosine (i(6)A). The polypeptide is tRNA dimethylallyltransferase (Salinispora tropica (strain ATCC BAA-916 / DSM 44818 / JCM 13857 / NBRC 105044 / CNB-440)).